We begin with the raw amino-acid sequence, 257 residues long: Ribonuclease PH (257 aa).

Phosphate-binding positions include R88 and 126 to 128; that span reads GTR.

This sequence belongs to the RNase PH family. Homohexameric ring arranged as a trimer of dimers.

It carries out the reaction tRNA(n+1) + phosphate = tRNA(n) + a ribonucleoside 5'-diphosphate. Functionally, phosphorolytic 3'-5' exoribonuclease that plays an important role in tRNA 3'-end maturation. Removes nucleotide residues following the 3'-CCA terminus of tRNAs; can also add nucleotides to the ends of RNA molecules by using nucleoside diphosphates as substrates, but this may not be physiologically important. Probably plays a role in initiation of 16S rRNA degradation (leading to ribosome degradation) during starvation. This Nocardia farcinica (strain IFM 10152) protein is Ribonuclease PH.